The following is a 251-amino-acid chain: Large ribosomal subunit protein uL2 (251 aa).

Basic residues predominate over residues 1–12 (MGKRLRVQRHGR). The tract at residues 1–22 (MGKRLRVQRHGRGTPQWRNRGH) is disordered.

It belongs to the universal ribosomal protein uL2 family. In terms of assembly, part of the 50S ribosomal subunit. Forms a bridge to the 30S subunit in the 70S ribosome.

In terms of biological role, one of the primary rRNA binding proteins. Required for association of the 30S and 50S subunits to form the 70S ribosome, for tRNA binding and peptide bond formation. It has been suggested to have peptidyltransferase activity; this is somewhat controversial. Makes several contacts with the 16S rRNA in the 70S ribosome. The protein is Large ribosomal subunit protein uL2 of Ignicoccus hospitalis (strain KIN4/I / DSM 18386 / JCM 14125).